We begin with the raw amino-acid sequence, 71 residues long: Small, acid-soluble spore protein I (71 aa).

The protein belongs to the SspI family.

It is found in the spore core. The polypeptide is Small, acid-soluble spore protein I (Bacillus velezensis (strain DSM 23117 / BGSC 10A6 / LMG 26770 / FZB42) (Bacillus amyloliquefaciens subsp. plantarum)).